The sequence spans 443 residues: Probable glutamate dehydrogenase (443 aa).

The active site involves K86.

Belongs to the Glu/Leu/Phe/Val dehydrogenases family.

The catalysed reaction is L-glutamate + NAD(+) + H2O = 2-oxoglutarate + NH4(+) + NADH + H(+). The enzyme catalyses L-glutamate + NADP(+) + H2O = 2-oxoglutarate + NH4(+) + NADPH + H(+). The polypeptide is Probable glutamate dehydrogenase (Sinorhizobium fredii (strain NBRC 101917 / NGR234)).